Reading from the N-terminus, the 114-residue chain is MSEDTIFGKIIRREIPADIVYEDDLCLAFRDVAPQAPVHILVIPKQPIANLLEATAEHQALLGHLLLTVKAIAAQEGLTEGYRTVINTGPAGGQTVYHLHIHLLGGRSLAWPPG.

Residues 6–114 (IFGKIIRREI…GGRSLAWPPG (109 aa)) form the HIT domain. The Histidine triad motif motif lies at 98–102 (HLHIH).

This is an uncharacterized protein from Synechococcus elongatus (strain ATCC 33912 / PCC 7942 / FACHB-805) (Anacystis nidulans R2).